Here is a 142-residue protein sequence, read N- to C-terminus: uncharacterized protein (142 aa).

This is an uncharacterized protein from Invertebrate iridescent virus 3 (IIV-3).